Consider the following 195-residue polypeptide: NADH-quinone oxidoreductase subunit C (195 aa).

Belongs to the complex I 30 kDa subunit family. As to quaternary structure, NDH-1 is composed of 14 different subunits. Subunits NuoB, C, D, E, F, and G constitute the peripheral sector of the complex.

The protein resides in the cell inner membrane. The catalysed reaction is a quinone + NADH + 5 H(+)(in) = a quinol + NAD(+) + 4 H(+)(out). NDH-1 shuttles electrons from NADH, via FMN and iron-sulfur (Fe-S) centers, to quinones in the respiratory chain. The immediate electron acceptor for the enzyme in this species is believed to be ubiquinone. Couples the redox reaction to proton translocation (for every two electrons transferred, four hydrogen ions are translocated across the cytoplasmic membrane), and thus conserves the redox energy in a proton gradient. In Laribacter hongkongensis (strain HLHK9), this protein is NADH-quinone oxidoreductase subunit C.